A 368-amino-acid chain; its full sequence is C-glycoside deglycosidase alpha subunit (368 aa).

Position 145 (E145) interacts with a divalent metal cation. H147 (proton acceptor) is an active-site residue. Residues D177, H275, and E311 each contribute to the a divalent metal cation site.

It belongs to the C-glycoside deglycosidase alpha subunit family. Heterodimer composed of an alpha subunit (CarB) and a beta subunit (CarC). The cofactor is a divalent metal cation.

It carries out the reaction 3''-dehydroisovitexin = 1,5-anhydro-D-erythro-hex-1-en-3-ulose + apigenin. It catalyses the reaction 3''-dehydroisoorientin = 1,5-anhydro-D-erythro-hex-1-en-3-ulose + luteolin. Carbon-carbon bond-cleaving enzyme which participates in the metabolism of C-glycosides. Acts on the C6-glycosylated compounds 3''-dehydroisovitexin (3''-oxo-isovitexin) and 3''-dehydroisoorientin (3''-oxo-homoorientin). Shows weak activity with 3'-dehydromangiferin (3'-oxo-mangiferin). In Microbacterium trichothecenolyticum (Aureobacterium trichothecenolyticum), this protein is C-glycoside deglycosidase alpha subunit.